Here is a 165-residue protein sequence, read N- to C-terminus: Ubiquitin-fold modifier-conjugating enzyme 1 (165 aa).

Residue C116 is the Glycyl thioester intermediate of the active site.

It belongs to the ubiquitin-conjugating enzyme family. UFC1 subfamily.

Functionally, E2-like enzyme which forms an intermediate with UFM1 via a thioester linkage. The chain is Ubiquitin-fold modifier-conjugating enzyme 1 from Drosophila virilis (Fruit fly).